The primary structure comprises 890 residues: Alanine--tRNA ligase (890 aa).

The Zn(2+) site is built by His-578, His-582, Cys-689, and His-693.

This sequence belongs to the class-II aminoacyl-tRNA synthetase family. Zn(2+) serves as cofactor.

It is found in the cytoplasm. It carries out the reaction tRNA(Ala) + L-alanine + ATP = L-alanyl-tRNA(Ala) + AMP + diphosphate. Functionally, catalyzes the attachment of alanine to tRNA(Ala) in a two-step reaction: alanine is first activated by ATP to form Ala-AMP and then transferred to the acceptor end of tRNA(Ala). Also edits incorrectly charged Ser-tRNA(Ala) and Gly-tRNA(Ala) via its editing domain. The polypeptide is Alanine--tRNA ligase (Deinococcus radiodurans (strain ATCC 13939 / DSM 20539 / JCM 16871 / CCUG 27074 / LMG 4051 / NBRC 15346 / NCIMB 9279 / VKM B-1422 / R1)).